Reading from the N-terminus, the 292-residue chain is Cyclic dipurine nucleotide synthase (292 aa).

ATP is bound at residue Gln-47. 48–52 (GSYRN) is a GTP binding site. 2 residues coordinate Mg(2+): Asp-61 and Asp-63. ATP is bound by residues Asp-63, 121–122 (NK), and Asp-136. Asp-136 lines the Mg(2+) pocket. GTP contacts are provided by Lys-197 and Ser-216.

Belongs to the CD-NTase family. E01 subfamily. Requires Mg(2+) as cofactor.

It catalyses the reaction 2 ATP = 3',3'-c-di-AMP + 2 diphosphate. The catalysed reaction is 2 GTP = 3',3'-c-di-GMP + 2 diphosphate. The enzyme catalyses GTP + ATP = 3',3'-cGAMP + 2 diphosphate. Its function is as follows. Cyclic nucleotide synthase (second messenger synthase) of a CBASS antivirus system. CBASS (cyclic oligonucleotide-based antiphage signaling system) provides immunity against bacteriophage. The CD-NTase protein synthesizes cyclic nucleotides in response to infection; these serve as specific second messenger signals. The signals activate a diverse range of effectors, leading to bacterial cell death and thus abortive phage infection. A type I-A(GA) CBASS system. Functionally, cyclic dinucleotide synthase that catalyzes the synthesis of 3'3'-cyclic GMP-AMP (cGAMP) from GTP and ATP, and of c-di-AMP and c-di-GMP, that are second messengers for cell signal transduction. This is Cyclic dipurine nucleotide synthase from Elizabethkingia meningoseptica (Chryseobacterium meningosepticum).